Reading from the N-terminus, the 332-residue chain is Ferredoxin--NADP reductase 2 (332 aa).

Residues E37, Q45, Y50, V90, F124, D285, and T326 each contribute to the FAD site.

The protein belongs to the ferredoxin--NADP reductase type 2 family. In terms of assembly, homodimer. FAD serves as cofactor.

It catalyses the reaction 2 reduced [2Fe-2S]-[ferredoxin] + NADP(+) + H(+) = 2 oxidized [2Fe-2S]-[ferredoxin] + NADPH. The chain is Ferredoxin--NADP reductase 2 (yumC) from Bacillus subtilis (strain 168).